We begin with the raw amino-acid sequence, 277 residues long: Cis-3,4-dihydrophenanthrene-3,4-diol dehydrogenase (277 aa).

Residues 10–37 and Asp60 contribute to the NAD(+) site; that span reads FLTG…TVLD. A substrate-binding site is contributed by Ser143. Tyr156 serves as the catalytic Proton acceptor. Lys160 contacts NAD(+).

Belongs to the short-chain dehydrogenases/reductases (SDR) family. As to quaternary structure, homotetramer.

It catalyses the reaction (3S,4R)-3,4-dihydrophenanthrene-3,4-diol + NAD(+) = phenanthrene-3,4-diol + NADH + H(+). Its activity is regulated as follows. Inhibited by heavy metal such as Hg(2+) and by p-chloromercuribenzoate. Functionally, involved in the degradation of phenanthrene. Catalyzes the oxidation of cis-phenanthrene dihydrodiol (PDD) to yield phenanthrenediol. It can use either NAD or NADP as electron acceptor, however NAD is preferred to NADP. In Alcaligenes faecalis, this protein is Cis-3,4-dihydrophenanthrene-3,4-diol dehydrogenase (phnB).